The sequence spans 103 residues: Histone H4.1 (103 aa).

A compositionally biased stretch (gly residues) spans 1 to 14 (MSGRGKGGKGLGKG). A disordered region spans residues 1–20 (MSGRGKGGKGLGKGGAKRHR). Lys6 carries the post-translational modification N6-acetyl-N6-methyllysine; alternate. Residues Lys6, Lys9, and Lys13 each carry the N6-methyllysine; alternate modification. Lys13 carries the N6-acetyl-N6-methyllysine; alternate modification. The DNA-binding element occupies 17 to 21 (KRHRK). Position 92 is an N6-glutaryllysine (Lys92).

This sequence belongs to the histone H4 family. The nucleosome is a histone octamer containing two molecules each of H2A, H2B, H3 and H4 assembled in one H3-H4 heterotetramer and two H2A-H2B heterodimers. The octamer wraps approximately 147 bp of DNA. In terms of processing, glutarylation at Lys-92 (H4K91glu) destabilizes nucleosomes by promoting dissociation of the H2A-H2B dimers from nucleosomes.

It is found in the nucleus. Its subcellular location is the chromosome. Core component of nucleosome. Nucleosomes wrap and compact DNA into chromatin, limiting DNA accessibility to the cellular machineries which require DNA as a template. Histones thereby play a central role in transcription regulation, DNA repair, DNA replication and chromosomal stability. DNA accessibility is regulated via a complex set of post-translational modifications of histones, also called histone code, and nucleosome remodeling. In Eremothecium gossypii (strain ATCC 10895 / CBS 109.51 / FGSC 9923 / NRRL Y-1056) (Yeast), this protein is Histone H4.1 (HHF1).